The sequence spans 712 residues: Cyclolysin secretion/processing ATP-binding protein CyaB (712 aa).

The region spanning 7-128 (QCASVPDSGL…ALWAGELLLC (122 aa)) is the Peptidase C39 domain. The ABC transmembrane type-1 domain occupies 157-439 (IGEVLLISLV…LAQLWNDFQQ (283 aa)). 6 helical membrane-spanning segments follow: residues 160-180 (VLLISLVLQFISLLTPLFFQV), 194-214 (LNVIAVGFLAAILFEALLTGI), 272-292 (AVTVLLDVVFSVVFIAVMFFY), 298-318 (LVVLAALPCYFLLSLVLTPVL), 367-387 (VAAGLSVANVAMLANTGVTLI), and 390-410 (LVALGVLWVGATEVVAQRMTV). The 236-residue stretch at 471-706 (IELDRVSFRY…GGLYARLQAL (236 aa)) folds into the ABC transporter domain. 505–512 (GRSGSGKS) is an ATP binding site.

This sequence belongs to the ABC transporter superfamily. Cyclolysin exporter (TC 3.A.1.109.2) family.

Its subcellular location is the cell membrane. Functionally, involved in the export of calmodulin-sensitive adenylate cyclase-hemolysin (cyclolysin). The sequence is that of Cyclolysin secretion/processing ATP-binding protein CyaB (cyaB) from Bordetella pertussis (strain ATCC 9797 / DSM 5571 / CCUG 30873 / LMG 14455 / NCTC 10739 / 18323).